A 398-amino-acid polypeptide reads, in one-letter code: MNIHEYQGKEILNSFGVRIQRGTVARNAKEAVEAAKELTEKTGTGWHVIKAQVHAGGRGKGGGVKLAKNLKEVEEIAGEIIGMNLVTPQTSAEGKKVHQVLVTEDVYYPGDNEPEEYYMSVLLNRATGRNMIMYSTEGGMDIETVAEETPELIFTEEIDPATGLLGFQARRIAFNLGLSGKGFKEMTKFVMSLYEAFEKSDSSLFEINPVLKTSDDLIMAVDAKVTLDDNALFRHKDYAEMRDVREENATEVEAREVGLNYVDLDGNVGCMVNGAGLAMATMDLIKQAGGEPANFLDVGGTADAKRVEEAFRLILKDDKVEAILVNIFGGIVRCDRVAQGIVDASKNMGDAMNVPIIVRLQGTNADIAKELIDNSGLKVSSAIQFQEAADKVQEVLSK.

An ATP-grasp domain is found at 9 to 253 (KEILNSFGVR…VREENATEVE (245 aa)). ATP-binding positions include K50, 57 to 59 (GRG), V106, and E116. Mg(2+)-binding residues include N208 and D222. Residues N273 and 330–332 (GIV) contribute to the substrate site.

This sequence belongs to the succinate/malate CoA ligase beta subunit family. Heterotetramer of two alpha and two beta subunits. It depends on Mg(2+) as a cofactor.

It catalyses the reaction succinate + ATP + CoA = succinyl-CoA + ADP + phosphate. It carries out the reaction GTP + succinate + CoA = succinyl-CoA + GDP + phosphate. It participates in carbohydrate metabolism; tricarboxylic acid cycle; succinate from succinyl-CoA (ligase route): step 1/1. Succinyl-CoA synthetase functions in the citric acid cycle (TCA), coupling the hydrolysis of succinyl-CoA to the synthesis of either ATP or GTP and thus represents the only step of substrate-level phosphorylation in the TCA. The beta subunit provides nucleotide specificity of the enzyme and binds the substrate succinate, while the binding sites for coenzyme A and phosphate are found in the alpha subunit. This Christiangramia forsetii (strain DSM 17595 / CGMCC 1.15422 / KT0803) (Gramella forsetii) protein is Succinate--CoA ligase [ADP-forming] subunit beta.